Here is a 356-residue protein sequence, read N- to C-terminus: tRNA N6-adenosine threonylcarbamoyltransferase (356 aa).

Residues H124, H128, and Y145 each contribute to the a divalent metal cation site. Substrate is bound by residues 145-149, D177, G192, E196, and N287; that span reads YVSGG. Residue D315 coordinates a divalent metal cation.

It belongs to the KAE1 / TsaD family. As to quaternary structure, component of the EKC/KEOPS complex composed of at least BUD32, CGI121, GON7, KAE1 and PCC1; the whole complex dimerizes. A divalent metal cation is required as a cofactor.

The protein localises to the cytoplasm. It localises to the nucleus. The enzyme catalyses L-threonylcarbamoyladenylate + adenosine(37) in tRNA = N(6)-L-threonylcarbamoyladenosine(37) in tRNA + AMP + H(+). Its function is as follows. Component of the EKC/KEOPS complex that is required for the formation of a threonylcarbamoyl group on adenosine at position 37 (t(6)A37) in tRNAs that read codons beginning with adenine. The complex is probably involved in the transfer of the threonylcarbamoyl moiety of threonylcarbamoyl-AMP (TC-AMP) to the N6 group of A37. KAE1 likely plays a direct catalytic role in this reaction, but requires other protein(s) of the complex to fulfill this activity. The EKC/KEOPS complex also promotes both telomere uncapping and telomere elongation. The complex is required for efficient recruitment of transcriptional coactivators. This is tRNA N6-adenosine threonylcarbamoyltransferase from Yarrowia lipolytica (strain CLIB 122 / E 150) (Yeast).